The primary structure comprises 195 residues: HTH-type transcriptional regulator BetI (195 aa).

The HTH tetR-type domain occupies 8-68 (PIRRQQLIEA…ATMRYLISHL (61 aa)). The segment at residues 31 to 50 (SIVQIARRAGVSNGIISHYF) is a DNA-binding region (H-T-H motif).

The protein operates within amine and polyamine biosynthesis; betaine biosynthesis via choline pathway [regulation]. Repressor involved in the biosynthesis of the osmoprotectant glycine betaine. It represses transcription of the choline transporter BetT and the genes of BetAB involved in the synthesis of glycine betaine. The chain is HTH-type transcriptional regulator BetI from Pectobacterium atrosepticum (strain SCRI 1043 / ATCC BAA-672) (Erwinia carotovora subsp. atroseptica).